The sequence spans 889 residues: Rho GTPase-activating protein 27 (889 aa).

The SH3 domain occupies 6-69 (VGDVYVLVEH…PAQYVRELPA (64 aa)). Residues 104-132 (AGPDGAPEESGGRASSLCGPAQRGAATQR) are disordered. Phosphoserine occurs at positions 156, 216, and 249. 2 consecutive WW domains span residues 246–280 (PLPS…SPFE) and 299–333 (VSLE…DEAE). Acidic residues predominate over residues 329 to 341 (EDEAENEPEEELE). Residues 329 to 397 (EDEAENEPEE…SPLTTPPGWS (69 aa)) are disordered. Ser-347 is subject to Phosphoserine. Residues 383–395 (EPGPTSPLTTPPG) are compositionally biased toward low complexity. One can recognise a WW 3 domain in the interval 411 to 444 (HFTQEQWVRLEDPHGKPYFYNPEDSSVRWELPQV). Residues 447–474 (PAPRSIHKSSQDGDTPAQASPPEEKVPA) are disordered. Residue Ser-456 is modified to Phosphoserine. Thr-461 is modified (phosphothreonine). Phosphoserine is present on Ser-466. The 117-residue stretch at 496 to 612 (TLDKAGVLHR…WHKAIAQGIQ (117 aa)) folds into the PH domain. Positions 617–655 (ELPPEESESSRVDFGSSERLGSWQEKEEDARPNAAAPAL) are disordered. The 190-residue stretch at 697–886 (CALAALCERE…LILQQCADIF (190 aa)) folds into the Rho-GAP domain.

As to quaternary structure, interacts with SH3KBP1/CIN85. In terms of tissue distribution, expressed in germinal center B-cell, spleen, chronic lymphocytic leukemia, pancreatic cancer and lung cancer.

It is found in the cytoplasm. The protein localises to the membrane. Functionally, rho GTPase-activating protein which may be involved in clathrin-mediated endocytosis. GTPase activators for the Rho-type GTPases act by converting them to an inactive GDP-bound state. Has activity toward CDC42 and RAC1. In Homo sapiens (Human), this protein is Rho GTPase-activating protein 27.